We begin with the raw amino-acid sequence, 324 residues long: Endochitinase A2 (324 aa).

The first 20 residues, 1–20 (MSKLRIPILLVLFIVSCCSA), serve as a signal peptide directing secretion. The Chitin-binding type-1 domain occupies 21 to 61 (EQCGTQAGGALCPGGLCCSKFGWCGSTSEYCGDGCQSQCSG). Intrachain disulfides connect C23–C38, C32–C44, C37–C51, and C55–C59. Residue E133 is the Proton donor of the active site. Intrachain disulfides connect C151–C170 and C269–C301. A propeptide spans 310–324 (SLPLSSILLDTVAAA) (removed in mature form).

This sequence belongs to the glycosyl hydrolase 19 family. Chitinase class I subfamily.

It catalyses the reaction Random endo-hydrolysis of N-acetyl-beta-D-glucosaminide (1-&gt;4)-beta-linkages in chitin and chitodextrins.. Its function is as follows. Defense against chitin-containing fungal pathogens. This Pisum sativum (Garden pea) protein is Endochitinase A2 (CHI2).